Here is a 230-residue protein sequence, read N- to C-terminus: Octanoyltransferase (230 aa).

The BPL/LPL catalytic domain occupies 38–215 (AGGADTLLLL…AVCAALDGVL (178 aa)). Substrate contacts are provided by residues 76-83 (RGGKITWH), 145-147 (AIG), and 158-160 (GFA). Cys-176 serves as the catalytic Acyl-thioester intermediate.

The protein belongs to the LipB family.

The protein localises to the cytoplasm. It catalyses the reaction octanoyl-[ACP] + L-lysyl-[protein] = N(6)-octanoyl-L-lysyl-[protein] + holo-[ACP] + H(+). It functions in the pathway protein modification; protein lipoylation via endogenous pathway; protein N(6)-(lipoyl)lysine from octanoyl-[acyl-carrier-protein]: step 1/2. Its function is as follows. Catalyzes the transfer of endogenously produced octanoic acid from octanoyl-acyl-carrier-protein onto the lipoyl domains of lipoate-dependent enzymes. Lipoyl-ACP can also act as a substrate although octanoyl-ACP is likely to be the physiological substrate. The polypeptide is Octanoyltransferase (Mycobacterium bovis (strain BCG / Tokyo 172 / ATCC 35737 / TMC 1019)).